Here is a 263-residue protein sequence, read N- to C-terminus: 4-hydroxy-2-oxo-heptane-1,7-dioate aldolase (263 aa).

The Proton acceptor role is filled by His-45. Gln-147 provides a ligand contact to substrate. Glu-149 serves as a coordination point for a divalent metal cation. 2 residues coordinate substrate: Ala-174 and Asp-175. A divalent metal cation is bound at residue Asp-175.

Belongs to the HpcH/HpaI aldolase family. In terms of assembly, homohexamer; trimer of dimers. Requires a divalent metal cation as cofactor.

The catalysed reaction is 4-hydroxy-2-oxoheptanedioate = succinate semialdehyde + pyruvate. It functions in the pathway aromatic compound metabolism; 4-hydroxyphenylacetate degradation; pyruvate and succinate semialdehyde from 4-hydroxyphenylacetate: step 7/7. In terms of biological role, catalyzes the reversible retro-aldol cleavage of 4-hydroxy-2-ketoheptane-1,7-dioate (HKHD) to pyruvate and succinic semialdehyde. The protein is 4-hydroxy-2-oxo-heptane-1,7-dioate aldolase of Salmonella dublin (strain CT_02021853).